The chain runs to 147 residues: Large ribosomal subunit protein uL15 (147 aa).

Residues 1-10 (MYLNTLSPNS) are compositionally biased toward polar residues. The interval 1 to 48 (MYLNTLSPNSKSHKKSKRVGRGIGSGFGKTSGRGHKGQKSRSGCKIRR) is disordered. The segment covering 11-20 (KSHKKSKRVG) has biased composition (basic residues). The span at 21–31 (RGIGSGFGKTS) shows a compositional bias: gly residues. Positions 32–47 (GRGHKGQKSRSGCKIR) are enriched in basic residues.

It belongs to the universal ribosomal protein uL15 family. As to quaternary structure, part of the 50S ribosomal subunit.

In terms of biological role, binds to the 23S rRNA. In Buchnera aphidicola subsp. Baizongia pistaciae (strain Bp), this protein is Large ribosomal subunit protein uL15.